A 778-amino-acid polypeptide reads, in one-letter code: MAGDDLIAKFQALGMSEQKAKETLKNANVTKNLQLSLAAAGSATLSDGTGMLIYHMATKLKPQTADHLPLLVRYIVEHKLDNTQRVDAALEYLLKCGQSLNANIDLQALEKECGVGVVVTPEQIERTVQAKIKASYKEALLEQRYHFNSFKILQDVRGELKWADAKSVKAAIDVEIFDLLGPKTEADLKPQTKANDKPKAAKPKAEVTPAAQTAEAASDGATTISELMKTKVHFHAPGENFKADGYVVTEHTERLLKEHLARTGGKVHTRFPPEPNGILHIGHAKAININFGYAAAHDGVCYLRYDDTNPEKEEEKFFLAIKEMVEWLGYKPFKITYSSDNFQQLYEWAVVLINKGLAYVCHQKAEELKGFNPKPSPWRERPIEESLRLFEDMKRGKIDEGAATLRMKVTLEEGKMDPVAYRIKFISHHRTGSDWCIYPTYDYTHCLCDSLEDITHSLCTKEFQSRRSSYYWLCNALGIYCPVQWEYGRLNMNYALVSKRKIAKLITEQIVHDWDDPRLFTLTALRRRGFPAEAINNFCAQMGVTGAQIAVDPAMLEAAVRDVLNVTAPRRLVVLEPLKVTIKNFPHAAPVQLEVPDFPQNPQQGTHKITLDKVIYIEQGDFKLEPEKGYRRLAPKQSVGLRHAGLVISVDEIVKDPATGQVVELICTSQPAEQAEKPKAFVQWVSQPIQLEVRLYEQLFKHKNPEDPNEVPGGFLSDISEQSMSVVVAFADRALNQAKVYDKFQFERIGFFSVDPDTSANHLVFNRTVGLKEDAGKK.

The span at 188-205 (LKPQTKANDKPKAAKPKA) shows a compositional bias: basic and acidic residues. Positions 188–219 (LKPQTKANDKPKAAKPKAEVTPAAQTAEAASD) are disordered. Residues 273–283 (PEPNGILHIGH) carry the 'HIGH' region motif. ATP is bound by residues 274 to 276 (EPN) and 280 to 286 (HIGHAKA). 2 residues coordinate L-glutamine: aspartate 306 and tyrosine 441. Residues threonine 460, 489 to 490 (RL), and 497 to 499 (VSK) contribute to the ATP site. Positions 496–500 (LVSKR) match the 'KMSKS' region motif.

Belongs to the class-I aminoacyl-tRNA synthetase family.

The enzyme catalyses tRNA(Gln) + L-glutamine + ATP = L-glutaminyl-tRNA(Gln) + AMP + diphosphate. This Drosophila melanogaster (Fruit fly) protein is Probable glutamine--tRNA ligase.